A 161-amino-acid chain; its full sequence is Regulator of ribonuclease activity A (161 aa).

This sequence belongs to the RraA family. Homotrimer. Binds to both RNA-binding sites in the C-terminal region of Rne and to RhlB.

The protein localises to the cytoplasm. In terms of biological role, globally modulates RNA abundance by binding to RNase E (Rne) and regulating its endonucleolytic activity. Can modulate Rne action in a substrate-dependent manner by altering the composition of the degradosome. Modulates RNA-binding and helicase activities of the degradosome. The protein is Regulator of ribonuclease activity A of Shigella dysenteriae serotype 1 (strain Sd197).